A 261-amino-acid chain; its full sequence is uncharacterized protein (261 aa).

The signal sequence occupies residues 1–22 (MKSIKRIGLCISLLILIIFVTS). The N-palmitoyl cysteine moiety is linked to residue cysteine 23. A lipid anchor (S-diacylglycerol cysteine) is attached at cysteine 23.

The protein belongs to the staphylococcal tandem lipoprotein family.

It is found in the cell membrane. This is an uncharacterized protein from Staphylococcus aureus (strain USA300).